The primary structure comprises 318 residues: Ferric enterobactin-binding periplasmic protein FepB (318 aa).

The signal sequence occupies residues 1 to 26; sequence MRLAPLYRNALLLTGLLLSGIAAVQA. Positions 48-318 constitute a Fe/B12 periplasmic-binding domain; sequence RIVSTSVTLT…QVLDRLKALF (271 aa).

It belongs to the bacterial solute-binding protein 8 family. The complex is composed of two ATP-binding proteins (FepC), two transmembrane proteins (FepD and FepG) and a solute-binding protein (FepB).

It is found in the periplasm. Part of the ABC transporter complex FepBDGC involved in ferric enterobactin uptake. Binds ferric enterobactin. The sequence is that of Ferric enterobactin-binding periplasmic protein FepB (fepB) from Escherichia coli O6:H1 (strain CFT073 / ATCC 700928 / UPEC).